Here is a 171-residue protein sequence, read N- to C-terminus: S-ribosylhomocysteine lyase (171 aa).

Residues His-54, His-58, and Cys-128 each coordinate Fe cation.

This sequence belongs to the LuxS family. Homodimer. Fe cation serves as cofactor.

It catalyses the reaction S-(5-deoxy-D-ribos-5-yl)-L-homocysteine = (S)-4,5-dihydroxypentane-2,3-dione + L-homocysteine. Functionally, involved in the synthesis of autoinducer 2 (AI-2) which is secreted by bacteria and is used to communicate both the cell density and the metabolic potential of the environment. The regulation of gene expression in response to changes in cell density is called quorum sensing. Catalyzes the transformation of S-ribosylhomocysteine (RHC) to homocysteine (HC) and 4,5-dihydroxy-2,3-pentadione (DPD). The protein is S-ribosylhomocysteine lyase of Salmonella typhi.